We begin with the raw amino-acid sequence, 621 residues long: MSSSKIAVLYGSETGNAQDFAAILSHKLNRLHFKHTFSSLADYKREDILRCRYLFIVCSTTGQGELPRNVYETVTGDQKNTLWTFLKKKKLPADFLNHIKTAFLGLGDSSYPKFNYALRIIHNRMVNQLGAKEIFDRMEADEQSMAGSNKGTGLGIESVYFEFEKRIITYLMDRFPTRKVGNEIIQREEIDKELYLEPITYLRIDDPHDQQSFSGGPTTFVGDKLIKTGTITLNKRITAKDHFQDVRQFTFESCDDIKYKPGDTVALYSYNTDQSVERMLECQPQWIPLADKPLSFTNGIPTHLLDGGVVQPLTLRNLLKYHCDFMSIPRSSFFLKIWTFATDVTRMERGEEQMKDQRQKLYEFATDEDMQELYDYCNRPRRSILEVMEDFLSIRLPLEYLLDFFPPIKPRLYSISSTANCNNIELTVAIVKYKTILRKIRTGVCTDFISKLKVGDKIRYKIQQNDLIKEEYRSNPFVMVGPGVGLAPLLSAVRSKVSPEMSLYFGCRFKDKDYLHGKELEDMANQGLIKFYPVFSRDRENSPDTKYVQDVLWKFGEEVTNLLVERKGIFFLCGASGKMPIQIRLTLLEMLKKWGGFKDDASAKEYLRSMEKEYRYIQETW.

The region spanning 6 to 168 (IAVLYGSETG…VYFEFEKRII (163 aa)) is the Flavodoxin-like domain. FMN is bound by residues 12-17 (SETGNA), 59-62 (STTG), 106-115 (LGDSSYPKFN), and E142. The FAD-binding FR-type domain maps to 224 to 489 (KLIKTGTITL…VGPGVGLAPL (266 aa)). FAD-binding positions include R381, 411-414 (RLYS), and 443-446 (GVCT). Residues 536-537 (SR) and 545-549 (TKYVQ) contribute to the NADP(+) site. W621 serves as a coordination point for FAD.

The protein belongs to the NADPH-dependent diflavin oxidoreductase NDOR1 family. In the N-terminal section; belongs to the flavodoxin family. It in the C-terminal section; belongs to the flavoprotein pyridine nucleotide cytochrome reductase family. Interacts with DRE2; as part of the cytosolic iron-sulfur (Fe-S) protein assembly (CIA) machinery. FAD serves as cofactor. FMN is required as a cofactor.

Its subcellular location is the cytoplasm. It is found in the mitochondrion. The enzyme catalyses 2 oxidized [2Fe-2S]-[protein] + NADPH = 2 reduced [2Fe-2S]-[protein] + NADP(+) + H(+). In terms of biological role, NADPH-dependent reductase which is a central component of the cytosolic iron-sulfur (Fe-S) protein assembly (CIA) machinery. Transfers electrons from NADPH via its FAD and FMN prosthetic groups to the [2Fe-2S] cluster of DRE2, another key component of the CIA machinery. In turn, this reduced cluster provides electrons for assembly of cytosolic iron-sulfur cluster proteins. Positively controls H(2)O(2)-induced cell death. The protein is NADPH-dependent diflavin oxidoreductase 1 of Candida glabrata (strain ATCC 2001 / BCRC 20586 / JCM 3761 / NBRC 0622 / NRRL Y-65 / CBS 138) (Yeast).